Reading from the N-terminus, the 96-residue chain is uncharacterized protein (96 aa).

This is an uncharacterized protein from Sulfolobus islandicus filamentous virus (isolate Iceland/Hveragerdi) (SIFV).